The sequence spans 152 residues: Arginine repressor (152 aa).

Belongs to the ArgR family.

The protein localises to the cytoplasm. Its pathway is amino-acid biosynthesis; L-arginine biosynthesis [regulation]. Regulates arginine biosynthesis genes. The chain is Arginine repressor from Lactococcus lactis subsp. lactis (strain IL1403) (Streptococcus lactis).